The primary structure comprises 607 residues: DNA primase (607 aa).

A CHC2-type zinc finger spans residues 39–63 (CPFHDDKNPSMSISSSKNIFKCWAC). Residues 267–350 (NQLFIVEGYF…IVEIVQWEHN (84 aa)) form the Toprim domain. Residues Glu-273, Asp-319, and Asp-321 each contribute to the Mg(2+) site.

Belongs to the DnaG primase family. Monomer. Interacts with DnaB. The cofactor is Zn(2+). Requires Mg(2+) as cofactor.

The enzyme catalyses ssDNA + n NTP = ssDNA/pppN(pN)n-1 hybrid + (n-1) diphosphate.. Functionally, RNA polymerase that catalyzes the synthesis of short RNA molecules used as primers for DNA polymerase during DNA replication. The polypeptide is DNA primase (Mycoplasma genitalium (strain ATCC 33530 / DSM 19775 / NCTC 10195 / G37) (Mycoplasmoides genitalium)).